A 780-amino-acid chain; its full sequence is Molybdenum cofactor sulfurase (780 aa).

Lys-246 is subject to N6-(pyridoxal phosphate)lysine. Cys-413 is a catalytic residue. The region spanning 635–780 (LRLLRQSGQR…MTCGDVVLVE (146 aa)) is the MOSC domain. At Ser-734 the chain carries Phosphoserine.

Belongs to the class-V pyridoxal-phosphate-dependent aminotransferase family. MOCOS subfamily. Pyridoxal 5'-phosphate is required as a cofactor.

It catalyses the reaction Mo-molybdopterin + L-cysteine + AH2 = thio-Mo-molybdopterin + L-alanine + A + H2O. Sulfurates the molybdenum cofactor. Sulfation of molybdenum is essential for xanthine dehydrogenase (XDH) and aldehyde oxidase (ADO) enzymes in which molybdenum cofactor is liganded by 1 oxygen and 1 sulfur atom in active form. In Drosophila yakuba (Fruit fly), this protein is Molybdenum cofactor sulfurase.